Reading from the N-terminus, the 921-residue chain is Protein translocase subunit SecA (921 aa).

ATP-binding positions include glutamine 85, 103–107 (GEGKT), and aspartate 514. Zn(2+)-binding residues include cysteine 905, cysteine 907, cysteine 916, and histidine 917.

Belongs to the SecA family. Monomer and homodimer. Part of the essential Sec protein translocation apparatus which comprises SecA, SecYEG and auxiliary proteins SecDF-YajC and YidC. It depends on Zn(2+) as a cofactor.

The protein resides in the cell inner membrane. Its subcellular location is the cytoplasm. It catalyses the reaction ATP + H2O + cellular proteinSide 1 = ADP + phosphate + cellular proteinSide 2.. Part of the Sec protein translocase complex. Interacts with the SecYEG preprotein conducting channel. Has a central role in coupling the hydrolysis of ATP to the transfer of proteins into and across the cell membrane, serving both as a receptor for the preprotein-SecB complex and as an ATP-driven molecular motor driving the stepwise translocation of polypeptide chains across the membrane. The polypeptide is Protein translocase subunit SecA (Herminiimonas arsenicoxydans).